The following is a 455-amino-acid chain: Alcohol acyl transferase 1 allele RGb (455 aa).

Active-site proton acceptor residues include His-164 and Asn-385.

The protein belongs to the plant acyltransferase family.

Functionally, involved in the biosynthesis of volatile esters which confer ripe apple fruit flavor. Alcohol acyl transferase that can use a wide range of alcohols as substrate to produce esters. The protein is Alcohol acyl transferase 1 allele RGb of Malus domestica (Apple).